Consider the following 328-residue polypeptide: Tetraacyldisaccharide 4'-kinase (328 aa).

55–62 (TAGGNGKT) lines the ATP pocket.

This sequence belongs to the LpxK family.

The enzyme catalyses a lipid A disaccharide + ATP = a lipid IVA + ADP + H(+). It functions in the pathway glycolipid biosynthesis; lipid IV(A) biosynthesis; lipid IV(A) from (3R)-3-hydroxytetradecanoyl-[acyl-carrier-protein] and UDP-N-acetyl-alpha-D-glucosamine: step 6/6. In terms of biological role, transfers the gamma-phosphate of ATP to the 4'-position of a tetraacyldisaccharide 1-phosphate intermediate (termed DS-1-P) to form tetraacyldisaccharide 1,4'-bis-phosphate (lipid IVA). This chain is Tetraacyldisaccharide 4'-kinase, found in Escherichia coli O7:K1 (strain IAI39 / ExPEC).